The primary structure comprises 782 residues: ATP-dependent 6-phosphofructokinase, muscle type (782 aa).

At T2 the chain carries N-acetylthreonine. An N-terminal catalytic PFK domain 1 region spans residues 2-390 (THEEHHAAKT…NWEVYKLLAH (389 aa)). ATP is bound by residues G25, 88 to 89 (RC), and 118 to 121 (GDGS). D119 is a binding site for Mg(2+). S133 is subject to Phosphoserine. Residues 164 to 166 (SID), R201, 208 to 210 (MGR), E264, R292, and 298 to 301 (HVQR) each bind substrate. Residue D166 is the Proton acceptor of the active site. S377 is subject to Phosphoserine. Residues 391-403 (IRPPVSKTSATMH) form an interdomain linker region. The interval 404 to 782 (TVAVMNVGAP…SRKRSGETSI (379 aa)) is C-terminal regulatory PFK domain 2. Residues R473 and 530–534 (TVSNN) contribute to the beta-D-fructose 2,6-bisphosphate site. Residue S532 is glycosylated (O-linked (GlcNAc) serine). K559 carries the N6-(2-hydroxyisobutyryl)lysine modification. Beta-D-fructose 2,6-bisphosphate is bound by residues R568, 575 to 577 (MGG), E631, R657, and 663 to 666 (HMQQ). S669 carries the post-translational modification Phosphoserine. R737 lines the beta-D-fructose 2,6-bisphosphate pocket. S777 carries the phosphoserine modification.

It belongs to the phosphofructokinase type A (PFKA) family. ATP-dependent PFK group I subfamily. Eukaryotic two domain clade 'E' sub-subfamily. Homo- and heterotetramers. Phosphofructokinase (PFK) enzyme functions as a tetramer composed of different combinations of 3 types of subunits, called PFKM (M), PFKL (L) and PFKP (P). The composition of the PFK tetramer differs according to the tissue type it is present in. The kinetic and regulatory properties of the tetrameric enzyme are dependent on the subunit composition, hence can vary across tissues. Interacts (via C-terminus) with HK1 (via N-terminal spermatogenic cell-specific region). Requires Mg(2+) as cofactor. GlcNAcylation decreases enzyme activity.

Its subcellular location is the cytoplasm. The catalysed reaction is beta-D-fructose 6-phosphate + ATP = beta-D-fructose 1,6-bisphosphate + ADP + H(+). It functions in the pathway carbohydrate degradation; glycolysis; D-glyceraldehyde 3-phosphate and glycerone phosphate from D-glucose: step 3/4. Its activity is regulated as follows. Allosterically activated by ADP, AMP, or fructose 2,6-bisphosphate, and allosterically inhibited by ATP or citrate. Functionally, catalyzes the phosphorylation of D-fructose 6-phosphate to fructose 1,6-bisphosphate by ATP, the first committing step of glycolysis. The chain is ATP-dependent 6-phosphofructokinase, muscle type (PFKM) from Canis lupus familiaris (Dog).